We begin with the raw amino-acid sequence, 307 residues long: S-methyl-5'-thioadenosine phosphorylase (307 aa).

Residues Ser16, Arg59 to His60, and Ser92 to Ala93 each bind phosphate. Met198 contacts substrate. Ser199 serves as a coordination point for phosphate. Residue Asp222–Asp224 participates in substrate binding.

The protein belongs to the PNP/MTAP phosphorylase family. MTAP subfamily. In terms of assembly, homotrimer.

The protein localises to the cytoplasm. The protein resides in the nucleus. It carries out the reaction S-methyl-5'-thioadenosine + phosphate = 5-(methylsulfanyl)-alpha-D-ribose 1-phosphate + adenine. It participates in amino-acid biosynthesis; L-methionine biosynthesis via salvage pathway; S-methyl-5-thio-alpha-D-ribose 1-phosphate from S-methyl-5'-thioadenosine (phosphorylase route): step 1/1. Catalyzes the reversible phosphorylation of S-methyl-5'-thioadenosine (MTA) to adenine and 5-methylthioribose-1-phosphate. Involved in the breakdown of MTA, a major by-product of polyamine biosynthesis. Responsible for the first step in the methionine salvage pathway after MTA has been generated from S-adenosylmethionine. Has broad substrate specificity with 6-aminopurine nucleosides as preferred substrates. This chain is S-methyl-5'-thioadenosine phosphorylase, found in Schizosaccharomyces pombe (strain 972 / ATCC 24843) (Fission yeast).